The chain runs to 391 residues: Succinate--CoA ligase [ADP-forming] subunit beta (391 aa).

Positions 9–245 constitute an ATP-grasp domain; it reads KQIFAKYGVP…ISEEDADERE (237 aa). ATP-binding positions include Lys46, 53–55, Glu99, Ala102, and Glu107; that span reads GRG. Mg(2+) contacts are provided by Asn200 and Asp214. Residues Asn265 and 322 to 324 contribute to the substrate site; that span reads GIV.

It belongs to the succinate/malate CoA ligase beta subunit family. Heterotetramer of two alpha and two beta subunits. Mg(2+) is required as a cofactor.

It catalyses the reaction succinate + ATP + CoA = succinyl-CoA + ADP + phosphate. The catalysed reaction is GTP + succinate + CoA = succinyl-CoA + GDP + phosphate. The protein operates within carbohydrate metabolism; tricarboxylic acid cycle; succinate from succinyl-CoA (ligase route): step 1/1. Functionally, succinyl-CoA synthetase functions in the citric acid cycle (TCA), coupling the hydrolysis of succinyl-CoA to the synthesis of either ATP or GTP and thus represents the only step of substrate-level phosphorylation in the TCA. The beta subunit provides nucleotide specificity of the enzyme and binds the substrate succinate, while the binding sites for coenzyme A and phosphate are found in the alpha subunit. This Sulfurimonas denitrificans (strain ATCC 33889 / DSM 1251) (Thiomicrospira denitrificans (strain ATCC 33889 / DSM 1251)) protein is Succinate--CoA ligase [ADP-forming] subunit beta.